A 351-amino-acid polypeptide reads, in one-letter code: Methylthioribose-1-phosphate isomerase (351 aa).

Residues 51–53 (RGA), Arg94, and Gln199 each bind substrate. Asp240 serves as the catalytic Proton donor. 250-251 (NK) contacts substrate.

Belongs to the eIF-2B alpha/beta/delta subunits family. MtnA subfamily. As to quaternary structure, homodimer.

The catalysed reaction is 5-(methylsulfanyl)-alpha-D-ribose 1-phosphate = 5-(methylsulfanyl)-D-ribulose 1-phosphate. It participates in amino-acid biosynthesis; L-methionine biosynthesis via salvage pathway; L-methionine from S-methyl-5-thio-alpha-D-ribose 1-phosphate: step 1/6. Its function is as follows. Catalyzes the interconversion of methylthioribose-1-phosphate (MTR-1-P) into methylthioribulose-1-phosphate (MTRu-1-P). This Bacillus cereus (strain ATCC 10987 / NRS 248) protein is Methylthioribose-1-phosphate isomerase.